The following is a 632-amino-acid chain: Cleavage stimulation factor subunit 2 tau variant (632 aa).

Positions 16 to 94 (RSVFVGNIPY…RALRVDNAAS (79 aa)) constitute an RRM domain. Disordered stretches follow at residues 201–296 (IPGK…PGGA) and 365–433 (YMGP…TRPM). A compositionally biased stretch (pro residues) spans 213 to 233 (PGGPGPSGPGGPGPGPAPGLC). Residues 234–244 (PGPNVMLNQQN) show a composition bias toward low complexity. The segment covering 275-287 (APGPIPAAVPGPG) has biased composition (pro residues). Low complexity predominate over residues 365–375 (YMGPPHQGPPM). Basic and acidic residues-rich tracts occupy residues 377 to 390 (HGHD…HDMR) and 420 to 433 (RGGR…TRPM). The 1-1; approximate repeat unit spans residues 428-432 (METRP). Positions 428–466 (METRPMETEVLEPRGMERRMETCAMETRGMDARGLEMRG) are 8 X 5 AA tandem repeats of M-E-T-R-[AG]. A 1-2; approximate repeat occupies 433-437 (METEV). The stretch at 438-442 (LEPRG) is one 1-3; approximate repeat. Residues 443–446 (MERR) form a 1-4; approximate repeat. One copy of the 1-5; approximate repeat lies at 447-451 (METCA). One copy of the 1-6 repeat lies at 452-456 (METRG). Residues 457-461 (MDARG) form a 1-7; approximate repeat. The stretch at 462–466 (LEMRG) is one 1-8; approximate repeat. The stretch at 508–512 (GGTMQ) is one 2-1; approximate repeat. The interval 508-565 (GGTMQGAGIQGGGMQGAGMQGGGMQGAGMQGGGMQGAGMQAGMQGASMQGGMQGAGMQ) is 12 X 5 AA tandem repeats of G-[AT]-G-[MI]-Q. The stretch at 513-517 (GAGIQ) is one 2-2 repeat. The 2-3; approximate repeat unit spans residues 518–522 (GGGMQ). Residues 519 to 543 (GGMQGAGMQGGGMQGAGMQGGGMQG) show a composition bias toward gly residues. The interval 519–590 (GGMQGAGMQG…GQSQVTPQDQ (72 aa)) is disordered. The stretch at 523–527 (GAGMQ) is one 2-4 repeat. The stretch at 528 to 532 (GGGMQ) is one 2-5; approximate repeat. A 2-6 repeat occupies 533 to 537 (GAGMQ). Residues 538 to 542 (GGGMQ) form a 2-7; approximate repeat. The 2-8 repeat unit spans residues 543–547 (GAGMQ). Over residues 544-557 (AGMQAGMQGASMQG) the composition is skewed to low complexity. The stretch at 548 to 551 (AGMQ) is one 2-9; approximate repeat. A 2-10; approximate repeat occupies 552–556 (GASMQ). The 2-11; approximate repeat unit spans residues 557-560 (GGMQ). Residues 558 to 574 (GMQGAGMQGASKQGGGQ) show a composition bias toward gly residues. A 2-12 repeat occupies 561–565 (GAGMQ). The segment covering 575-584 (PSSFSPGQSQ) has biased composition (low complexity). Position 579 is a phosphoserine (S579).

As to expression, expressed in testes, where it is restricted to pachytene spermatocytes and spermatids, and in the brain (at protein level).

The protein resides in the nucleus. Functionally, may play a significant role in AAUAAA-independent mRNA polyadenylation in germ cells. Directly involved in the binding to pre-mRNAs. This chain is Cleavage stimulation factor subunit 2 tau variant (Cstf2t), found in Mus musculus (Mouse).